We begin with the raw amino-acid sequence, 273 residues long: Ribosomal RNA small subunit methyltransferase A (273 aa).

S-adenosyl-L-methionine contacts are provided by asparagine 18, leucine 20, glycine 45, glutamate 66, aspartate 91, and asparagine 113.

Belongs to the class I-like SAM-binding methyltransferase superfamily. rRNA adenine N(6)-methyltransferase family. RsmA subfamily.

The protein localises to the cytoplasm. It catalyses the reaction adenosine(1518)/adenosine(1519) in 16S rRNA + 4 S-adenosyl-L-methionine = N(6)-dimethyladenosine(1518)/N(6)-dimethyladenosine(1519) in 16S rRNA + 4 S-adenosyl-L-homocysteine + 4 H(+). Its function is as follows. Specifically dimethylates two adjacent adenosines (A1518 and A1519) in the loop of a conserved hairpin near the 3'-end of 16S rRNA in the 30S particle. May play a critical role in biogenesis of 30S subunits. The polypeptide is Ribosomal RNA small subunit methyltransferase A (Klebsiella pneumoniae (strain 342)).